The primary structure comprises 198 residues: MTTILQINSAARSQGAQSTLLANELTAKLQQSNPGAKVVVRDLLADALPHLDESVLGAFFTPADKRTAEQNAIVAKSDALIAELQAADVIVIGAPMYNFGISSQLKTYFDWIARAGVTFRYTENGPEGLIKGKKVHVVTARGGKYAGTPNDSQTPYLRTFLGFVGMTDVNFIFAEGLNLGPDAQSAALAGAREAIAAA.

Residue Met-96–Phe-99 participates in FMN binding.

Belongs to the azoreductase type 1 family. Homodimer. The cofactor is FMN.

It catalyses the reaction 2 a quinone + NADH + H(+) = 2 a 1,4-benzosemiquinone + NAD(+). It carries out the reaction N,N-dimethyl-1,4-phenylenediamine + anthranilate + 2 NAD(+) = 2-(4-dimethylaminophenyl)diazenylbenzoate + 2 NADH + 2 H(+). In terms of biological role, quinone reductase that provides resistance to thiol-specific stress caused by electrophilic quinones. Its function is as follows. Also exhibits azoreductase activity. Catalyzes the reductive cleavage of the azo bond in aromatic azo compounds to the corresponding amines. The chain is FMN-dependent NADH:quinone oxidoreductase 6 from Burkholderia lata (strain ATCC 17760 / DSM 23089 / LMG 22485 / NCIMB 9086 / R18194 / 383).